Reading from the N-terminus, the 499-residue chain is Glucose-6-phosphate isomerase (499 aa).

The Proton donor role is filled by Glu-352. Active-site residues include His-383 and Lys-487.

This sequence belongs to the GPI family.

The protein localises to the cytoplasm. It catalyses the reaction alpha-D-glucose 6-phosphate = beta-D-fructose 6-phosphate. It participates in carbohydrate biosynthesis; gluconeogenesis. Its pathway is carbohydrate degradation; glycolysis; D-glyceraldehyde 3-phosphate and glycerone phosphate from D-glucose: step 2/4. Its function is as follows. Catalyzes the reversible isomerization of glucose-6-phosphate to fructose-6-phosphate. This Legionella pneumophila (strain Paris) protein is Glucose-6-phosphate isomerase.